The following is a 452-amino-acid chain: Isocitrate dehydrogenase [NADP], mitochondrial (452 aa).

Residues 1 to 39 (MAGYLRVVRSLCRASGSGSAWAPAALTAPNLQEQPRRHY) constitute a mitochondrion transit peptide. 4 positions are modified to N6-acetyllysine: Lys45, Lys48, Lys67, and Lys69. An N6-acetyllysine; alternate mark is found at Lys80 and Lys106. Lys80 and Lys106 each carry N6-succinyllysine; alternate. NADP(+) is bound by residues 115 to 117 (TIT) and Arg122. D-threo-isocitrate is bound at residue Thr117. Residues 134–140 (SPNGTIR) and Arg149 contribute to the D-threo-isocitrate site. Lys155 carries the N6-acetyllysine modification. Lys166 is subject to N6-acetyllysine; alternate. Lys166 carries the N6-succinyllysine; alternate modification. Arg172 contributes to the D-threo-isocitrate binding site. An N6-acetyllysine; alternate mark is found at Lys180 and Lys193. Lys180 and Lys193 each carry N6-succinyllysine; alternate. Lys199 is modified (N6-acetyllysine). Lys256 is subject to N6-acetyllysine; alternate. Lys256 is subject to N6-succinyllysine; alternate. N6-acetyllysine is present on residues Lys263, Lys272, Lys275, and Lys280. An N6-acetyllysine; alternate modification is found at Lys282. N6-succinyllysine; alternate is present on Lys282. Asp291 lines the Mn(2+) pocket. Lys299 is an NADP(+) binding site. Asp314 is a binding site for Mn(2+). NADP(+)-binding positions include 349–354 (GTVTRH) and Asn367. Lys384 bears the N6-acetyllysine; alternate mark. Position 384 is an N6-succinyllysine; alternate (Lys384). N6-acetyllysine occurs at positions 400, 413, and 442.

Belongs to the isocitrate and isopropylmalate dehydrogenases family. Homodimer. Mg(2+) is required as a cofactor. It depends on Mn(2+) as a cofactor. Acetylation at Lys-413 dramatically reduces catalytic activity. Deacetylated by SIRT3.

The protein localises to the mitochondrion. It catalyses the reaction D-threo-isocitrate + NADP(+) = 2-oxoglutarate + CO2 + NADPH. Plays a role in intermediary metabolism and energy production. It may tightly associate or interact with the pyruvate dehydrogenase complex. The protein is Isocitrate dehydrogenase [NADP], mitochondrial (IDH2) of Bos taurus (Bovine).